A 313-amino-acid chain; its full sequence is MKSKRRHSGRDVNGILLLDKPKNFSSNQVLQKVKSLFAARRAGHTGALDPLATGMLPICLGEATKFSPFLLNADKRYRVTAYLGHKTETSDAEGSVINKREITFTQPQLEEALEKFRGPILQIPSMYSALKHQGRPLYEYARQGVTLDREARRITVFDLQCLRWEGHELELEIHCSKGTYIRTIVDDLGEVLGCGAYVSDLRRLQVADYTHDSMVTLEKLEELTLKNNTLGSAIDLLLLPIESTALHLPEVNLESGAAACIKQGQPVSFFDNPTDTMVRLTEGGERHFIGIGIIDAHGRIAPKRLLRNVSDAL.

H44 lines the substrate pocket. D49 serves as the catalytic Nucleophile. Positions 77, 180, and 201 each coordinate substrate.

The protein belongs to the pseudouridine synthase TruB family. Type 1 subfamily.

It carries out the reaction uridine(55) in tRNA = pseudouridine(55) in tRNA. Functionally, responsible for synthesis of pseudouridine from uracil-55 in the psi GC loop of transfer RNAs. The chain is tRNA pseudouridine synthase B from Hamiltonella defensa subsp. Acyrthosiphon pisum (strain 5AT).